The following is a 443-amino-acid chain: ATP-dependent protease ATPase subunit HslU (443 aa).

Residues Ile-18, 60-65 (GVGKTE), Asp-256, Glu-321, and Arg-393 contribute to the ATP site.

It belongs to the ClpX chaperone family. HslU subfamily. In terms of assembly, a double ring-shaped homohexamer of HslV is capped on each side by a ring-shaped HslU homohexamer. The assembly of the HslU/HslV complex is dependent on binding of ATP.

It is found in the cytoplasm. Its function is as follows. ATPase subunit of a proteasome-like degradation complex; this subunit has chaperone activity. The binding of ATP and its subsequent hydrolysis by HslU are essential for unfolding of protein substrates subsequently hydrolyzed by HslV. HslU recognizes the N-terminal part of its protein substrates and unfolds these before they are guided to HslV for hydrolysis. This chain is ATP-dependent protease ATPase subunit HslU, found in Pectobacterium carotovorum subsp. carotovorum (strain PC1).